Consider the following 144-residue polypeptide: Large ribosomal subunit protein uL11 (144 aa).

This sequence belongs to the universal ribosomal protein uL11 family. In terms of assembly, part of the ribosomal stalk of the 50S ribosomal subunit. Interacts with L10 and the large rRNA to form the base of the stalk. L10 forms an elongated spine to which L12 dimers bind in a sequential fashion forming a multimeric L10(L12)X complex. One or more lysine residues are methylated.

Functionally, forms part of the ribosomal stalk which helps the ribosome interact with GTP-bound translation factors. The polypeptide is Large ribosomal subunit protein uL11 (Streptomyces griseus subsp. griseus (strain JCM 4626 / CBS 651.72 / NBRC 13350 / KCC S-0626 / ISP 5235)).